Here is a 468-residue protein sequence, read N- to C-terminus: Probable citrate synthase, mitochondrial (468 aa).

Catalysis depends on residues H303, H349, and D404.

It belongs to the citrate synthase family. As to quaternary structure, homodimer.

The protein resides in the mitochondrion matrix. The enzyme catalyses oxaloacetate + acetyl-CoA + H2O = citrate + CoA + H(+). It participates in carbohydrate metabolism; tricarboxylic acid cycle; isocitrate from oxaloacetate: step 1/2. This is Probable citrate synthase, mitochondrial (cts-1) from Caenorhabditis elegans.